Here is an 84-residue protein sequence, read N- to C-terminus: Omega-theraphotoxin-Pm1a (84 aa).

The N-terminal stretch at 1–21 (MKTSMLAVFVALPLAFVLTAA) is a signal peptide. Residues 22–45 (TEERAHPNELVNSLVELVKLDAER) constitute a propeptide that is removed on maturation. Intrachain disulfides connect C52–C66, C59–C71, and C65–C78.

It belongs to the neurotoxin 10 (Hwtx-1) family. 41 (Jztx-36) subfamily. In terms of tissue distribution, expressed by the venom gland.

The protein resides in the secreted. Functionally, omega-conotoxins act at presynaptic membranes, they bind and block voltage-gated calcium channels (Cav). This toxin inhibits barium currents (IBa) mediated by L-type voltage-gated calcium channels Cav1.2/CACNA1C (IC(50)=825 nM) and Cav1.3/CACNA1C (IC(50)=2240 nM). The polypeptide is Omega-theraphotoxin-Pm1a (Pelinobius muticus (King baboon spider)).